The primary structure comprises 120 residues: Chaperonin GroEL (120 aa).

23–27 (DGTTT) contributes to the ATP binding site.

It belongs to the chaperonin (HSP60) family. As to quaternary structure, forms a cylinder of 14 subunits composed of two heptameric rings stacked back-to-back. Interacts with the co-chaperonin GroES.

It localises to the cytoplasm. It carries out the reaction ATP + H2O + a folded polypeptide = ADP + phosphate + an unfolded polypeptide.. In terms of biological role, together with its co-chaperonin GroES, plays an essential role in assisting protein folding. The GroEL-GroES system forms a nano-cage that allows encapsulation of the non-native substrate proteins and provides a physical environment optimized to promote and accelerate protein folding. The polypeptide is Chaperonin GroEL (Mycolicibacterium vaccae (Mycobacterium vaccae)).